We begin with the raw amino-acid sequence, 2025 residues long: E3 ubiquitin-protein ligase TRIP12 (2025 aa).

A compositionally biased stretch (polar residues) spans 1-10 (MSNRPNNNPG). The interval 1–404 (MSNRPNNNPG…SGESESDDSE (404 aa)) is disordered. S2 carries the post-translational modification N-acetylserine. The residue at position 12 (S12) is a Phosphoserine. Over residues 18–27 (RNTAGAQPQD) the composition is skewed to polar residues. The span at 48-70 (DPDRANTSERQKTGQVPKKDNSR) shows a compositional bias: basic and acidic residues. A phosphoserine mark is found at S77, S85, and S100. Polar residues-rich tracts occupy residues 78-88 (PDYNRTNSPSS), 99-108 (ESLSETNKPP), and 119-132 (EQQL…STSK). Low complexity-rich tracts occupy residues 154 to 166 (SSCV…SEST) and 175 to 216 (PTKL…SSTV). The residue at position 181 (K181) is an N6-acetyllysine. Polar residues predominate over residues 280–290 (PGSSKSETSKP). Residues S310 and S312 each carry the phosphoserine modification. The segment covering 326–338 (QKTTGSCASTSRR) has biased composition (polar residues). Positions 346–358 (GAAEARRQEKMAD) are enriched in basic and acidic residues. Residues 362–371 (NQETVNSSAA) show a composition bias toward polar residues. Over residues 379 to 397 (GAAASSSVAGAVGMTTSGE) the composition is skewed to low complexity. The WWE domain occupies 755–869 (MLKKGNAQNT…DPELAKSFIK (115 aa)). The disordered stretch occupies residues 970-1077 (ESLLTSPPKA…QSPKSSFLAS (108 aa)). S975 is subject to Phosphoserine. Residues 983–1006 (GSGSLGSTTPASSGTATAATNASA) are compositionally biased toward low complexity. A phosphoserine mark is found at S1024 and S1030. Residues 1034–1047 (KRKRLPKRGPRRPK) are compositionally biased toward basic residues. At S1049 the chain carries Phosphoserine. The segment covering 1050-1059 (PPRDDDKVDN) has biased composition (basic and acidic residues). Residues 1062-1073 (KSPTTTQSPKSS) are compositionally biased toward low complexity. 5 positions are modified to phosphoserine: S1063, S1350, S1355, S1362, and S1409. Position 1410 is a phosphothreonine (T1410). Disordered stretches follow at residues 1440 to 1466 (SSKD…NAKK) and 1601 to 1620 (TNPE…PRLD). K1458 carries the N6-acetyllysine modification. S1460 carries the phosphoserine modification. The K-box stretch occupies residues 1529–1603 (EIIPTSEFIN…AMQRLLDTNP (75 aa)). The HECT domain maps to 1918–2025 (PDHGYTHDSR…REGQQSFHLS (108 aa)). The active-site Glycyl thioester intermediate is C1992.

It belongs to the UPL family. K-HECT subfamily. As to quaternary structure, interacts with MYC; leading to disrupt interaction with isoform p19ARF/ARF of CDKN2A. Interacts with TRADD; leading to disrupt interaction with isoform p19ARF/ARF of CDKN2A. Interacts with SMARCC1; leading to disrupt interaction with SMARCE1.

It is found in the nucleus. It localises to the nucleoplasm. The catalysed reaction is S-ubiquitinyl-[E2 ubiquitin-conjugating enzyme]-L-cysteine + [acceptor protein]-L-lysine = [E2 ubiquitin-conjugating enzyme]-L-cysteine + N(6)-ubiquitinyl-[acceptor protein]-L-lysine.. The protein operates within protein modification; protein ubiquitination. In terms of biological role, E3 ubiquitin-protein ligase involved in ubiquitin fusion degradation (UFD) pathway and regulation of DNA repair. Part of the ubiquitin fusion degradation (UFD) pathway, a process that mediates ubiquitination of protein at their N-terminus, regardless of the presence of lysine residues in target proteins. Acts as a key regulator of DNA damage response by acting as a suppressor of RNF168, an E3 ubiquitin-protein ligase that promotes accumulation of 'Lys-63'-linked histone H2A and H2AX at DNA damage sites, thereby acting as a guard against excessive spreading of ubiquitinated chromatin at damaged chromosomes. In normal cells, mediates ubiquitination and degradation of isoform p19ARF/ARF of CDKN2A, a lysine-less tumor suppressor required for p53/TP53 activation under oncogenic stress. In cancer cells, however, isoform p19ARF/ARF and TRIP12 are located in different cell compartments, preventing isoform p19ARF/ARF ubiquitination and degradation. Does not mediate ubiquitination of isoform p16-INK4a of CDKN2A. Also catalyzes ubiquitination of NAE1 and SMARCE1, leading to their degradation. Ubiquitination and degradation of target proteins is regulated by interaction with proteins such as MYC, TRADD or SMARCC1, which disrupt the interaction between TRIP12 and target proteins. Mediates ubiquitination of ASXL1: following binding to N(6)-methyladenosine methylated DNA, ASXL1 is ubiquitinated by TRIP12, leading to its degradation and subsequent inactivation of the PR-DUB complex. The chain is E3 ubiquitin-protein ligase TRIP12 (Trip12) from Rattus norvegicus (Rat).